Here is a 426-residue protein sequence, read N- to C-terminus: Putative zinc protease AlbF (426 aa).

Residue histidine 66 participates in Zn(2+) binding. The active-site Proton acceptor is glutamate 69. Zn(2+)-binding residues include histidine 70 and glutamate 142.

It belongs to the peptidase M16 family. It depends on Zn(2+) as a cofactor.

Required for production of the bacteriocin subtilosin. Could catalyze some step in the processing of presubtilosin. The sequence is that of Putative zinc protease AlbF (albF) from Bacillus subtilis (strain 168).